Consider the following 215-residue polypeptide: Thymidylate kinase (215 aa).

11–18 serves as a coordination point for ATP; sequence GIDGAGKS.

Belongs to the thymidylate kinase family.

It catalyses the reaction dTMP + ATP = dTDP + ADP. Phosphorylation of dTMP to form dTDP in both de novo and salvage pathways of dTTP synthesis. This chain is Thymidylate kinase, found in Nitrosomonas europaea (strain ATCC 19718 / CIP 103999 / KCTC 2705 / NBRC 14298).